The primary structure comprises 1241 residues: Anion exchange protein 2 (1241 aa).

The tract at residues 1-240 is disordered; it reads MSSAPRRPAK…RSYNLQERRR (240 aa). The Cytoplasmic segment spans residues 1-707; the sequence is MSSAPRRPAK…SDFRDALDPQ (707 aa). 2 stretches are compositionally biased toward basic and acidic residues: residues 37-49 and 58-75; these read ELHR…RFEE and GGEE…EYHR. Composition is skewed to basic residues over residues 76 to 85 and 94 to 110; these read QSSHHIHHPL and RRRK…RRRP. Ser113, Ser132, Ser144, Ser170, Ser172, and Ser173 each carry phosphoserine. Residues 120–133 are compositionally biased toward acidic residues; that stretch reads TIEEGEEDEDEASE. Residues 141-155 show a composition bias toward low complexity; sequence TQPSPVSTPSSVQFF. At Thr183 the chain carries Phosphothreonine. Residues 189 to 209 show a composition bias toward low complexity; sequence GAQAGTQVEEAEAEAVAVASG. Positions 210–219 are enriched in gly residues; sequence TAGGDDGGAS. Ser243 carries the phosphoserine modification. Residue Thr257 is modified to Phosphothreonine. The residue at position 274 (Lys274) is an N6-methyllysine. The interval 288-320 is disordered; it reads LVRKNAKGSTQSGREGREPGPTPRARPRAPHKP. Phosphoserine is present on Ser443. The interval 449-471 is disordered; it reads SLLGHHHGQGAESDPHVTEPLMG. 4 helical membrane-spanning segments follow: residues 708-731, 737-774, 784-816, and 826-847; these read CLAA…GLLG, LIGV…LLVF, SNHL…SFLV, and IFAF…VKIF. The membrane (anion exchange) stretch occupies residues 708-1241; that stretch reads CLAAVIFIYF…DEYNEMPMPV (534 aa). Over 848-900 the chain is Extracellular; the sequence is QEHPLHGCSASNSSEVDGGENMTWAGARPTLGPGNRSLAGQSGQGKPRGQPNT. Asn859, Asn868, and Asn882 each carry an N-linked (GlcNAc...) asparagine glycan. A helical membrane pass occupies residues 901-918; the sequence is ALLSLVLMAGTFFIAFFL. Residues 919-933 lie on the Cytoplasmic side of the membrane; that stretch reads RKFKNSRFFPGRIRR. 5 helical membrane-spanning segments follow: residues 934–954, 988–1010, 1036–1059, 1091–1136, and 1163–1199; these read VIGD…DYSI, PFPV…LIFM, LLLI…AATV, VTGL…IQFY, and MHLF…TVPL. Cys1173 carries the S-palmitoyl cysteine lipid modification.

This sequence belongs to the anion exchanger (TC 2.A.31) family. Expressed in the liver, stomach, kidney, prostate, thyroid and rectum. In terms of tissue distribution, expressed in the liver and kidney.

It localises to the apical cell membrane. It is found in the basolateral cell membrane. It catalyses the reaction hydrogencarbonate(in) + chloride(out) = hydrogencarbonate(out) + chloride(in). Functionally, sodium-independent anion exchanger which mediates the electroneutral exchange of chloride for bicarbonate ions across the cell membrane. Plays an important role in osteoclast differentiation and function. Regulates bone resorption and calpain-dependent actin cytoskeleton organization in osteoclasts via anion exchange-dependent control of pH. Essential for intracellular pH regulation in CD8(+) T-cells upon CD3 stimulation, modulating CD8(+) T-cell responses. In Homo sapiens (Human), this protein is Anion exchange protein 2 (SLC4A2).